Reading from the N-terminus, the 338-residue chain is Ketol-acid reductoisomerase (NADP(+)) (338 aa).

One can recognise a KARI N-terminal Rossmann domain in the interval 1-181 (MKVFYDKDAD…GGGRAGIIET (181 aa)). NADP(+) is bound by residues 24-27 (YGSQ), arginine 47, and serine 52. Histidine 107 is an active-site residue. Glycine 133 serves as a coordination point for NADP(+). A KARI C-terminal knotted domain is found at 182 to 327 (NFREETETDL…AKLRSMMPWI (146 aa)). Positions 190, 194, 226, and 230 each coordinate Mg(2+). Serine 251 lines the substrate pocket.

The protein belongs to the ketol-acid reductoisomerase family. The cofactor is Mg(2+).

It carries out the reaction (2R)-2,3-dihydroxy-3-methylbutanoate + NADP(+) = (2S)-2-acetolactate + NADPH + H(+). The catalysed reaction is (2R,3R)-2,3-dihydroxy-3-methylpentanoate + NADP(+) = (S)-2-ethyl-2-hydroxy-3-oxobutanoate + NADPH + H(+). Its pathway is amino-acid biosynthesis; L-isoleucine biosynthesis; L-isoleucine from 2-oxobutanoate: step 2/4. The protein operates within amino-acid biosynthesis; L-valine biosynthesis; L-valine from pyruvate: step 2/4. Involved in the biosynthesis of branched-chain amino acids (BCAA). Catalyzes an alkyl-migration followed by a ketol-acid reduction of (S)-2-acetolactate (S2AL) to yield (R)-2,3-dihydroxy-isovalerate. In the isomerase reaction, S2AL is rearranged via a Mg-dependent methyl migration to produce 3-hydroxy-3-methyl-2-ketobutyrate (HMKB). In the reductase reaction, this 2-ketoacid undergoes a metal-dependent reduction by NADPH to yield (R)-2,3-dihydroxy-isovalerate. The sequence is that of Ketol-acid reductoisomerase (NADP(+)) from Paraburkholderia phytofirmans (strain DSM 17436 / LMG 22146 / PsJN) (Burkholderia phytofirmans).